We begin with the raw amino-acid sequence, 177 residues long: Thymidine kinase (177 aa).

An ATP-binding site is contributed by 11–18 (GPMFSGKS). Glu-83 (proton acceptor) is an active-site residue. Position 113 (Phe-113) interacts with substrate. The Zn(2+) site is built by Cys-138 and Cys-141. 157-161 (IEIIG) provides a ligand contact to substrate. Cys-170 and Cys-173 together coordinate Zn(2+).

It belongs to the thymidine kinase family. As to quaternary structure, homotetramer. Two molecules of substrate bind to each enzyme tetramer.

The catalysed reaction is thymidine + ATP = dTMP + ADP + H(+). Phosphorylates thymidine and thymidine analogs, such as azidothymidine (AZT). Part of the salvage pathway for pyrimidine deoxyribonucleotide synthesis. This Homo sapiens (Human) protein is Thymidine kinase (OPG101).